A 147-amino-acid polypeptide reads, in one-letter code: MTDRVKKTRKLRGHVSHGYGRVGKHRKHSGGRGLAGGFSHMKTFFTRFHPDYHGKRGMRVYHRKENSDYARPISSARLWGMIPKEQRYDFLDNPEKVPVIDVREFGYHVVVGGKLSLERPIVVKARYFTPSAKEEITKVGGKWIITY.

Basic residues predominate over residues 1–15 (MTDRVKKTRKLRGHV). The tract at residues 1 to 34 (MTDRVKKTRKLRGHVSHGYGRVGKHRKHSGGRGL) is disordered.

Belongs to the universal ribosomal protein uL15 family.

This Encephalitozoon cuniculi (strain GB-M1) (Microsporidian parasite) protein is Large ribosomal subunit protein uL15 (RPL27A).